The sequence spans 345 residues: Ferrochelatase (345 aa).

Positions 215 and 296 each coordinate Fe cation.

The protein belongs to the ferrochelatase family.

Its subcellular location is the cytoplasm. It carries out the reaction heme b + 2 H(+) = protoporphyrin IX + Fe(2+). The protein operates within porphyrin-containing compound metabolism; protoheme biosynthesis; protoheme from protoporphyrin-IX: step 1/1. Catalyzes the ferrous insertion into protoporphyrin IX. This chain is Ferrochelatase, found in Rhodopseudomonas palustris (strain BisA53).